The sequence spans 445 residues: Exodeoxyribonuclease 7 large subunit (445 aa).

The protein belongs to the XseA family. In terms of assembly, heterooligomer composed of large and small subunits.

The protein resides in the cytoplasm. It catalyses the reaction Exonucleolytic cleavage in either 5'- to 3'- or 3'- to 5'-direction to yield nucleoside 5'-phosphates.. Functionally, bidirectionally degrades single-stranded DNA into large acid-insoluble oligonucleotides, which are then degraded further into small acid-soluble oligonucleotides. This is Exodeoxyribonuclease 7 large subunit from Xanthomonas oryzae pv. oryzae (strain PXO99A).